The following is a 105-amino-acid chain: MTRRLRVHNGVEDDLFEAFSYYADAAPDQIDRLYNLFVDAVTKRIPQAPNAFAPLFKHYRHIYLRPFRYYVAYRTTDEAIDILAVRHGMENPNAVEAEISGRTFE.

Belongs to the RelE toxin family.

Toxic component of a type II toxin-antitoxin (TA) system. Its toxic effect is neutralized by coexpression with cognate antitoxin ParD2. This chain is Toxin ParE2 (parE2), found in Mycobacterium tuberculosis (strain CDC 1551 / Oshkosh).